A 370-amino-acid polypeptide reads, in one-letter code: Chaperone protein DnaJ (370 aa).

One can recognise a J domain in the interval 7–73; sequence DYYEILGVPR…QKRAMYDRFG (67 aa). The CR-type zinc-finger motif lies at 144-226; sequence GTEIPIEYER…CGGSGRVLRR (83 aa). The Zn(2+) site is built by C157, C160, C174, C177, C200, C203, C214, and C217. CXXCXGXG motif repeat units follow at residues 157-164, 174-181, 200-207, and 214-221; these read CPRCGGTG, CDECGGTG, and CHECGGSG.

The protein belongs to the DnaJ family. As to quaternary structure, homodimer. It depends on Zn(2+) as a cofactor.

It localises to the cytoplasm. Its function is as follows. Participates actively in the response to hyperosmotic and heat shock by preventing the aggregation of stress-denatured proteins and by disaggregating proteins, also in an autonomous, DnaK-independent fashion. Unfolded proteins bind initially to DnaJ; upon interaction with the DnaJ-bound protein, DnaK hydrolyzes its bound ATP, resulting in the formation of a stable complex. GrpE releases ADP from DnaK; ATP binding to DnaK triggers the release of the substrate protein, thus completing the reaction cycle. Several rounds of ATP-dependent interactions between DnaJ, DnaK and GrpE are required for fully efficient folding. Also involved, together with DnaK and GrpE, in the DNA replication of plasmids through activation of initiation proteins. The protein is Chaperone protein DnaJ of Thermotoga neapolitana (strain ATCC 49049 / DSM 4359 / NBRC 107923 / NS-E).